The primary structure comprises 364 residues: Dihydroorotate dehydrogenase (quinone) (364 aa).

Residues 61-65 (AGFDK) and Thr85 each bind FMN. A substrate-binding site is contributed by Lys65. A substrate-binding site is contributed by 110–114 (NRMGF). FMN contacts are provided by Asn139 and Asn170. Asn170 is a substrate binding site. The active-site Nucleophile is the Ser173. Asn175 lines the substrate pocket. FMN contacts are provided by Lys214 and Ala242. 243–244 (NT) provides a ligand contact to substrate. FMN-binding positions include Gly266, Gly295, and 316 to 317 (YS).

This sequence belongs to the dihydroorotate dehydrogenase family. Type 2 subfamily. As to quaternary structure, monomer. Requires FMN as cofactor.

The protein resides in the cell membrane. It carries out the reaction (S)-dihydroorotate + a quinone = orotate + a quinol. It functions in the pathway pyrimidine metabolism; UMP biosynthesis via de novo pathway; orotate from (S)-dihydroorotate (quinone route): step 1/1. In terms of biological role, catalyzes the conversion of dihydroorotate to orotate with quinone as electron acceptor. In Rhodopseudomonas palustris (strain TIE-1), this protein is Dihydroorotate dehydrogenase (quinone).